Here is an 84-residue protein sequence, read N- to C-terminus: Putative membrane protein insertion efficiency factor (84 aa).

The protein belongs to the UPF0161 family.

It is found in the cell inner membrane. Could be involved in insertion of integral membrane proteins into the membrane. The protein is Putative membrane protein insertion efficiency factor of Shewanella pealeana (strain ATCC 700345 / ANG-SQ1).